Consider the following 137-residue polypeptide: Probable leaf thionin (137 aa).

Positions 1–28 are cleaved as a signal peptide; it reads MATNKSIKSVVICVLILGLVLEQVQVEG. 4 disulfide bridges follow: Cys31–Cys68, Cys32–Cys60, Cys40–Cys58, and Cys44–Cys54. A propeptide spans 75 to 137 (acidic domain); it reads LNLLPESGEP…DGDVIQSVEA (63 aa).

This sequence belongs to the plant thionin (TC 1.C.44) family. 4 C-C subfamily.

Its subcellular location is the secreted. Its function is as follows. Thionins are small plant proteins which are toxic to animal cells. They seem to exert their toxic effect at the level of the cell membrane. Their precise function is not known. The sequence is that of Probable leaf thionin from Hordeum vulgare (Barley).